A 286-amino-acid chain; its full sequence is 4-hydroxy-tetrahydrodipicolinate synthase 2 (286 aa).

T45 provides a ligand contact to pyruvate. Catalysis depends on Y133, which acts as the Proton donor/acceptor. K161 acts as the Schiff-base intermediate with substrate in catalysis. I203 provides a ligand contact to pyruvate.

It belongs to the DapA family. Homotetramer; dimer of dimers.

It localises to the cytoplasm. It carries out the reaction L-aspartate 4-semialdehyde + pyruvate = (2S,4S)-4-hydroxy-2,3,4,5-tetrahydrodipicolinate + H2O + H(+). It functions in the pathway amino-acid biosynthesis; L-lysine biosynthesis via DAP pathway; (S)-tetrahydrodipicolinate from L-aspartate: step 3/4. In terms of biological role, catalyzes the condensation of (S)-aspartate-beta-semialdehyde [(S)-ASA] and pyruvate to 4-hydroxy-tetrahydrodipicolinate (HTPA). In Clostridium acetobutylicum (strain ATCC 824 / DSM 792 / JCM 1419 / IAM 19013 / LMG 5710 / NBRC 13948 / NRRL B-527 / VKM B-1787 / 2291 / W), this protein is 4-hydroxy-tetrahydrodipicolinate synthase 2.